The chain runs to 419 residues: Keratin, type II cytoskeletal I (419 aa).

A linker 1 region spans residues 1–16 (KGSTKRANLDPLFEKY). The IF rod domain maps to 1–275 (KGSTKRANLD…YMLEGEEGRM (275 aa)). The segment at 17-108 (ISDLKRYLDN…TLFAAELSQV (92 aa)) is coil 1B. The linker 12 stretch occupies residues 109-132 (HDQVTDTSVVLTMDNNRDLNLDSI). Residues 133 to 271 (IKEVKCQYEQ…STYRYMLEGE (139 aa)) are coil 2. Residues 272–419 (EGRMSGQISN…STTSTTKRSY (148 aa)) are tail.

The protein belongs to the intermediate filament family. Heterotetramer of two type I and two type II keratins.

The protein is Keratin, type II cytoskeletal I of Xenopus laevis (African clawed frog).